Consider the following 413-residue polypeptide: Peptidase T (413 aa).

Histidine 84 is a binding site for Zn(2+). The active site involves aspartate 86. Residue aspartate 147 coordinates Zn(2+). Glutamate 181 functions as the Proton acceptor in the catalytic mechanism. 3 residues coordinate Zn(2+): glutamate 182, aspartate 204, and histidine 386.

It belongs to the peptidase M20B family. Requires Zn(2+) as cofactor.

It is found in the cytoplasm. It carries out the reaction Release of the N-terminal residue from a tripeptide.. In terms of biological role, cleaves the N-terminal amino acid of tripeptides. In Ligilactobacillus salivarius (strain UCC118) (Lactobacillus salivarius), this protein is Peptidase T.